We begin with the raw amino-acid sequence, 265 residues long: Putative 2-aminoethylphosphonate transport system permease protein PhnV (265 aa).

6 helical membrane passes run 13–33 (GVVA…VILM), 69–89 (LTIG…AALA), 104–124 (VFYL…LVAF), 131–151 (MNGT…AFTF), 185–205 (LPLL…LSMG), and 233–253 (NIAD…LLMM). Residues 65–253 (LLASLTIGFC…LVAITLLLMM (189 aa)) enclose the ABC transmembrane type-1 domain.

It belongs to the binding-protein-dependent transport system permease family.

The protein resides in the cell inner membrane. Its function is as follows. Probably part of the PhnSTUV complex (TC 3.A.1.11.5) involved in 2-aminoethylphosphonate import. Probably responsible for the translocation of the substrate across the membrane. The sequence is that of Putative 2-aminoethylphosphonate transport system permease protein PhnV (phnV) from Salmonella choleraesuis (strain SC-B67).